Consider the following 230-residue polypeptide: Large ribosomal subunit protein uL4 (230 aa).

The interval 59-113 (RQGTHATKTRGEVSGGGKKPYRQKGTGRARQGSTRAPQFTGGGTVHGPQPRDYSQ) is disordered.

This sequence belongs to the universal ribosomal protein uL4 family. As to quaternary structure, part of the 50S ribosomal subunit.

Its function is as follows. One of the primary rRNA binding proteins, this protein initially binds near the 5'-end of the 23S rRNA. It is important during the early stages of 50S assembly. It makes multiple contacts with different domains of the 23S rRNA in the assembled 50S subunit and ribosome. Functionally, forms part of the polypeptide exit tunnel. In Nocardia farcinica (strain IFM 10152), this protein is Large ribosomal subunit protein uL4.